A 396-amino-acid polypeptide reads, in one-letter code: MAKAKFERTKPHVNIGTIGHVDHGKTTTTAAITKVLADAYPELNEAFAFDAIDKAPEEKERGITINISHVEYQTEKRHYAHVDAPGHADYIKNMITGAAQMDGAILVVAATDGPMPQTREHVLLARQVGVPYILVALNKCDMVDDEEIIELVEMEIRELLAEQDYDEEAPIIHISALKALEGDEKWTQSIIDLMQACDDSIPDPERETDKPFLMPIEDIFTITGRGTVVTGRVERGSLKVNEDVEIIGIREKATTTTVTGIEMFRKLLDYTEAGDNCGLLLRGVKREDVERGQVVVKPGAYTPHTEFEGSVYVLSKDEGGRHTPFFDNYRPQFYFRTTDVTGVVKLPEGTEMVMPGDNVDMSVTLIQPVAMDEGLRFAIREGSRTVGAGRVTKIIK.

A tr-type G domain is found at 10–205; the sequence is KPHVNIGTIG…ACDDSIPDPE (196 aa). A G1 region spans residues 19–26; the sequence is GHVDHGKT. Residue 19–26 coordinates GTP; it reads GHVDHGKT. Mg(2+) is bound at residue Thr-26. Residues 62-66 are G2; sequence GITIN. Positions 83–86 are G3; that stretch reads DAPG. GTP is bound by residues 83–87 and 138–141; these read DAPGH and NKCD. Positions 138-141 are G4; sequence NKCD. Positions 175–177 are G5; that stretch reads SAL.

It belongs to the TRAFAC class translation factor GTPase superfamily. Classic translation factor GTPase family. EF-Tu/EF-1A subfamily. As to quaternary structure, monomer.

Its subcellular location is the cytoplasm. The enzyme catalyses GTP + H2O = GDP + phosphate + H(+). Functionally, GTP hydrolase that promotes the GTP-dependent binding of aminoacyl-tRNA to the A-site of ribosomes during protein biosynthesis. The protein is Elongation factor Tu of Corynebacterium diphtheriae (strain ATCC 700971 / NCTC 13129 / Biotype gravis).